The primary structure comprises 357 residues: Phenylalanine--tRNA ligase alpha subunit (357 aa).

Glutamate 257 is a binding site for Mg(2+).

The protein belongs to the class-II aminoacyl-tRNA synthetase family. Phe-tRNA synthetase alpha subunit type 1 subfamily. Tetramer of two alpha and two beta subunits. Mg(2+) is required as a cofactor.

The protein resides in the cytoplasm. It carries out the reaction tRNA(Phe) + L-phenylalanine + ATP = L-phenylalanyl-tRNA(Phe) + AMP + diphosphate + H(+). This is Phenylalanine--tRNA ligase alpha subunit from Ruegeria sp. (strain TM1040) (Silicibacter sp.).